Reading from the N-terminus, the 242-residue chain is Ubiquinone biosynthesis O-methyltransferase (242 aa).

The S-adenosyl-L-methionine site is built by Arg44, Gly64, Asp85, and Met129.

This sequence belongs to the methyltransferase superfamily. UbiG/COQ3 family.

The catalysed reaction is a 3-demethylubiquinol + S-adenosyl-L-methionine = a ubiquinol + S-adenosyl-L-homocysteine + H(+). It carries out the reaction a 3-(all-trans-polyprenyl)benzene-1,2-diol + S-adenosyl-L-methionine = a 2-methoxy-6-(all-trans-polyprenyl)phenol + S-adenosyl-L-homocysteine + H(+). The protein operates within cofactor biosynthesis; ubiquinone biosynthesis. O-methyltransferase that catalyzes the 2 O-methylation steps in the ubiquinone biosynthetic pathway. This Salmonella paratyphi A (strain ATCC 9150 / SARB42) protein is Ubiquinone biosynthesis O-methyltransferase.